The sequence spans 205 residues: MSDGRGNLELDVSRETLERLMVFSEVLKKWNPKINLVSRKSIDDLWTRHILDSIQVFDAAPEGGAWLDIGSGGGLPGIIVAILAAEKSPDTRITLMESDLRKCAFLRNAARECGVSVTVKSKRIESAPEENCDVLSARALADLDNLLGFAERHLAENGTAMFPKGANWKKEVDNARKRWRFECDEITSVTEPGAVILKIKGVERV.

Residues Gly70, Leu75, 124–125 (IE), and Arg138 each bind S-adenosyl-L-methionine.

It belongs to the methyltransferase superfamily. RNA methyltransferase RsmG family.

The protein localises to the cytoplasm. It catalyses the reaction guanosine(527) in 16S rRNA + S-adenosyl-L-methionine = N(7)-methylguanosine(527) in 16S rRNA + S-adenosyl-L-homocysteine. Specifically methylates the N7 position of guanine in position 527 of 16S rRNA. The chain is Ribosomal RNA small subunit methyltransferase G from Ruegeria sp. (strain TM1040) (Silicibacter sp.).